Here is an 898-residue protein sequence, read N- to C-terminus: Endoplasmic reticulum metallopeptidase 1 (898 aa).

Residue M1 is modified to N-acetylmethionine. Residues 1-55 (MEWSSESAAVRRHRGTAERREGEAAASHRQREASAQEDAKGVGRMWGKTENGGGS) form a disordered region. Over 1-66 (MEWSSESAAV…VAKTALSEAR (66 aa)) the chain is Cytoplasmic. Residues 29–41 (RQREASAQEDAKG) are compositionally biased toward basic and acidic residues. A helical membrane pass occupies residues 67–87 (TALALALYLLALRALVQLSLQ). The Lumenal segment spans residues 88-393 (RLVLSRTSGL…SSSEYRHGSM (306 aa)). Residue N176 is glycosylated (N-linked (GlcNAc...) asparagine). Cysteines 198 and 216 form a disulfide. The Zn(2+) site is built by H199 and D211. E245 serves as the catalytic Proton acceptor. Zn(2+) is bound by residues E246, E272, and H348. The chain crosses the membrane as a helical span at residues 394–414 (VFFDVLGLLVIAYPSRVGSII). The Cytoplasmic segment spans residues 415-451 (NYMVVMAVVLYLGKKLLRPKHRNANYMRDFLCGLGIT). The helical transmembrane segment at 452–472 (FISWFTSLVTVLIIAVFISLI) threads the bilayer. Topologically, residues 473–480 (GQSLSWYN) are lumenal. A helical membrane pass occupies residues 481–501 (YFYIAVCLYGTATVAKIIFIH). Over 502-515 (TLAKRFYYMNASDL) the chain is Cytoplasmic. Residues 516 to 538 (YLGELFFDTSLFVHCAFLVALTY) traverse the membrane as a helical segment. Residues 539 to 542 (QGFC) are Lumenal-facing. Residues 543–562 (SAFMSAVWVVFPLLTKLCVY) traverse the membrane as a helical segment. The Cytoplasmic portion of the chain corresponds to 563–573 (KDFKKHGAQGR). The helical transmembrane segment at 574–594 (FVALYLLGMFIPYLYGLYLIW) threads the bilayer. Topologically, residues 595–615 (AVFEMFTPILGRSGSEIPPDV) are lumenal. The helical transmembrane segment at 616 to 636 (VLASILAVCVMILSSYFITFI) threads the bilayer. Residues 637–645 (YLVNSTKKT) are Cytoplasmic-facing. Residues 646 to 666 (ILTLILVCAVTFLLVCSGAFF) form a helical membrane-spanning segment. Over 667-898 (PYSSNPESPK…WVSTYSLFVF (232 aa)) the chain is Lumenal. N724 is a glycosylation site (N-linked (GlcNAc...) asparagine).

This sequence belongs to the peptidase M28 family. It depends on Zn(2+) as a cofactor.

The protein resides in the endoplasmic reticulum membrane. Its function is as follows. Within the ovary, required for the organization of somatic cells and oocytes into discrete follicular structures. The chain is Endoplasmic reticulum metallopeptidase 1 from Mus musculus (Mouse).